The chain runs to 66 residues: Large ribosomal subunit protein bL35 (66 aa).

A compositionally biased stretch (basic residues) spans 1–16 (MPKQKTHRASAKRFKR). Residues 1-21 (MPKQKTHRASAKRFKRTGNGG) are disordered.

The protein belongs to the bacterial ribosomal protein bL35 family.

The polypeptide is Large ribosomal subunit protein bL35 (Lactococcus lactis subsp. cremoris (strain MG1363)).